The chain runs to 281 residues: Probable endonuclease 4 (281 aa).

Residues His-78, His-118, Glu-149, Asp-181, His-184, His-216, Asp-229, His-231, and Glu-260 each coordinate Zn(2+).

It belongs to the AP endonuclease 2 family. It depends on Zn(2+) as a cofactor.

The catalysed reaction is Endonucleolytic cleavage to 5'-phosphooligonucleotide end-products.. Its function is as follows. Endonuclease IV plays a role in DNA repair. It cleaves phosphodiester bonds at apurinic or apyrimidinic (AP) sites, generating a 3'-hydroxyl group and a 5'-terminal sugar phosphate. This chain is Probable endonuclease 4, found in Thermoplasma acidophilum (strain ATCC 25905 / DSM 1728 / JCM 9062 / NBRC 15155 / AMRC-C165).